The following is a 131-amino-acid chain: Ribonuclease VapC4 (131 aa).

In terms of domain architecture, PINc spans 4–106; that stretch reads IVPDTNFLIY…IVATNDKELK (103 aa). The Mg(2+) site is built by aspartate 7 and aspartate 102.

The protein belongs to the PINc/VapC protein family. The cofactor is Mg(2+).

In terms of biological role, toxic component of a type II toxin-antitoxin (TA) system. An RNase. Its cognate antitoxin is VapB4. The polypeptide is Ribonuclease VapC4 (Methanocaldococcus jannaschii (strain ATCC 43067 / DSM 2661 / JAL-1 / JCM 10045 / NBRC 100440) (Methanococcus jannaschii)).